Reading from the N-terminus, the 205-residue chain is LexA repressor (205 aa).

The H-T-H motif DNA-binding region spans 28 to 48 (IRDIMKHFNFKSPRAAHKHLI). Residues Ser125 and Lys163 each act as for autocatalytic cleavage activity in the active site.

It belongs to the peptidase S24 family. As to quaternary structure, homodimer.

The catalysed reaction is Hydrolysis of Ala-|-Gly bond in repressor LexA.. Functionally, represses a number of genes involved in the response to DNA damage (SOS response), including recA and lexA. In the presence of single-stranded DNA, RecA interacts with LexA causing an autocatalytic cleavage which disrupts the DNA-binding part of LexA, leading to derepression of the SOS regulon and eventually DNA repair. This chain is LexA repressor, found in Petrotoga mobilis (strain DSM 10674 / SJ95).